Reading from the N-terminus, the 172-residue chain is Cytidylate kinase (172 aa).

4–12 serves as a coordination point for ATP; the sequence is GPPGSGKST.

Belongs to the cytidylate kinase family. Type 2 subfamily.

The protein resides in the cytoplasm. The catalysed reaction is CMP + ATP = CDP + ADP. It catalyses the reaction dCMP + ATP = dCDP + ADP. This chain is Cytidylate kinase (cmk), found in Aeropyrum pernix (strain ATCC 700893 / DSM 11879 / JCM 9820 / NBRC 100138 / K1).